A 364-amino-acid polypeptide reads, in one-letter code: Histidinol-phosphate aminotransferase (364 aa).

Position 226 is an N6-(pyridoxal phosphate)lysine (Lys226).

Belongs to the class-II pyridoxal-phosphate-dependent aminotransferase family. Histidinol-phosphate aminotransferase subfamily. In terms of assembly, homodimer. The cofactor is pyridoxal 5'-phosphate.

It catalyses the reaction L-histidinol phosphate + 2-oxoglutarate = 3-(imidazol-4-yl)-2-oxopropyl phosphate + L-glutamate. Its pathway is amino-acid biosynthesis; L-histidine biosynthesis; L-histidine from 5-phospho-alpha-D-ribose 1-diphosphate: step 7/9. In Campylobacter jejuni (strain RM1221), this protein is Histidinol-phosphate aminotransferase.